The chain runs to 290 residues: Inositol monophosphatase 2 (290 aa).

Mg(2+) contacts are provided by E83, D103, I105, and D106. E83 is a binding site for substrate. Residues 105–108, 207–209, Q226, and D233 contribute to the substrate site; these read IDGT and GSS. Mg(2+) is bound at residue D233.

This sequence belongs to the inositol monophosphatase superfamily. As to quaternary structure, homodimer. Mg(2+) serves as cofactor. Mostly expressed in brain, small intestine, heart, kidney, and spleen (at protein level).

It localises to the cytoplasm. It carries out the reaction a myo-inositol phosphate + H2O = myo-inositol + phosphate. It catalyses the reaction 1D-myo-inositol 1-phosphate + H2O = myo-inositol + phosphate. The enzyme catalyses 1D-myo-inositol 2-phosphate + H2O = myo-inositol + phosphate. The catalysed reaction is 1D-myo-inositol 3-phosphate + H2O = myo-inositol + phosphate. It carries out the reaction 1D-myo-inositol 4-phosphate + H2O = myo-inositol + phosphate. It catalyses the reaction 1D-myo-inositol 5-phosphate + H2O = myo-inositol + phosphate. The enzyme catalyses 1D-myo-inositol 6-phosphate + H2O = myo-inositol + phosphate. The catalysed reaction is alpha-D-glucose 1-phosphate + H2O = D-glucose + phosphate. It carries out the reaction glycerol 2-phosphate + H2O = glycerol + phosphate. It catalyses the reaction adenosine 2'-phosphate + H2O = adenosine + phosphate. It functions in the pathway polyol metabolism; myo-inositol biosynthesis; myo-inositol from D-glucose 6-phosphate: step 2/2. In terms of biological role, phosphatase that can use myo-inositol monophosphates, myo-inositol 1,4-diphosphate, scyllo-inositol-1,4-diphosphate, glucose-1-phosphate, beta-glycerophosphate and 2'-AMP as substrates in vitro. No physiological substrates has been described yet. Has been implicated as the pharmacological target for lithium Li(+) action in brain. The sequence is that of Inositol monophosphatase 2 from Mus musculus (Mouse).